The primary structure comprises 235 residues: Large ribosomal subunit protein uL1 (235 aa).

This sequence belongs to the universal ribosomal protein uL1 family. As to quaternary structure, part of the 50S ribosomal subunit.

In terms of biological role, binds directly to 23S rRNA. The L1 stalk is quite mobile in the ribosome, and is involved in E site tRNA release. Protein L1 is also a translational repressor protein, it controls the translation of the L11 operon by binding to its mRNA. This chain is Large ribosomal subunit protein uL1, found in Thermobifida fusca (strain YX).